The following is a 274-amino-acid chain: Diaminopimelate epimerase (274 aa).

Substrate-binding residues include asparagine 11, glutamine 44, and asparagine 64. The active-site Proton donor is the cysteine 73. Substrate contacts are provided by residues 74–75, asparagine 157, asparagine 190, and 208–209; these read GN and ER. The active-site Proton acceptor is the cysteine 217. 218-219 is a substrate binding site; the sequence is GS.

It belongs to the diaminopimelate epimerase family. Homodimer.

Its subcellular location is the cytoplasm. It catalyses the reaction (2S,6S)-2,6-diaminopimelate = meso-2,6-diaminopimelate. Its pathway is amino-acid biosynthesis; L-lysine biosynthesis via DAP pathway; DL-2,6-diaminopimelate from LL-2,6-diaminopimelate: step 1/1. In terms of biological role, catalyzes the stereoinversion of LL-2,6-diaminopimelate (L,L-DAP) to meso-diaminopimelate (meso-DAP), a precursor of L-lysine and an essential component of the bacterial peptidoglycan. The sequence is that of Diaminopimelate epimerase from Pasteurella multocida (strain Pm70).